The chain runs to 216 residues: Ras-related protein Rab-2B (216 aa).

GDP contacts are provided by Gly16, Val17, Gly18, Lys19, Ser20, and Cys21. GTP is bound by residues Gly16, Val17, Gly18, Lys19, Ser20, Cys21, and Thr38. Position 20 (Ser20) interacts with Mg(2+). The Switch 1 motif lies at 37–42; that stretch reads LTIGVE. Mg(2+) is bound by residues Thr38 and Asp61. Residues 63 to 72 carry the Switch 2 motif; sequence AGQESFRSIT. 6 residues coordinate GTP: Gly64, Asn119, Lys120, Asp122, Ala150, and Lys151. Asn119 provides a ligand contact to GDP. Residues Asp122, Ala150, and Lys151 each coordinate GDP. The tract at residues 189-216 is disordered; the sequence is PQQSISTSVGPSASQRNSRDIGSNSGCC. Ser202 is subject to Phosphoserine. Residues Cys215 and Cys216 are each lipidated (S-geranylgeranyl cysteine).

It belongs to the small GTPase superfamily. Rab family. Interacts (in GTP-bound form) with GARIN4 (via N-terminus). Interacts (in GTP-bound form) with GARIN5A. Interacts (in GTP-bound form) with GARIN1B. Interacts with VPS39 and VPS41. The cofactor is Mg(2+). As to expression, expressed in kidney, prostate, lung, liver, thymus, colon, pancreas, and skeletal muscle, and low levels in placenta. Not detected in heart, brain, spleen, testis, ovary, small intestine and leukocyte.

It localises to the cell membrane. The protein resides in the endoplasmic reticulum membrane. Its subcellular location is the golgi apparatus membrane. It is found in the cytoplasmic vesicle. The protein localises to the secretory vesicle. It localises to the acrosome. The protein resides in the autophagosome membrane. It catalyses the reaction GTP + H2O = GDP + phosphate + H(+). Regulated by guanine nucleotide exchange factors (GEFs) which promote the exchange of bound GDP for free GTP, GTPase activating proteins (GAPs) which increase the GTP hydrolysis activity, and GDP dissociation inhibitors (GDIs) which inhibit the dissociation of the nucleotide from the GTPase. The small GTPases Rab are key regulators of intracellular membrane trafficking, from the formation of transport vesicles to their fusion with membranes. Rabs cycle between active GTP-bound and inactive GDP-bound states. In their active state, drive transport of vesicular carriers from donor organelles to acceptor organelles to regulate the membrane traffic that maintains organelle identity and morphology. Regulates the compacted morphology of the Golgi. Promotes cytosolic DNA-induced innate immune responses. Regulates IFN responses against DNA viruses by regulating the CGAS-STING signaling axis. Together with RAB2A redundantly required for efficient autophagic flux. The sequence is that of Ras-related protein Rab-2B from Homo sapiens (Human).